Here is a 123-residue protein sequence, read N- to C-terminus: Large ribosomal subunit protein uL14 (123 aa).

Belongs to the universal ribosomal protein uL14 family. Part of the 50S ribosomal subunit. Forms a cluster with proteins L3 and L19. In the 70S ribosome, L14 and L19 interact and together make contacts with the 16S rRNA in bridges B5 and B8.

In terms of biological role, binds to 23S rRNA. Forms part of two intersubunit bridges in the 70S ribosome. The polypeptide is Large ribosomal subunit protein uL14 (Hamiltonella defensa subsp. Acyrthosiphon pisum (strain 5AT)).